Consider the following 216-residue polypeptide: Large ribosomal subunit protein uL3 (216 aa).

The residue at position 153 (Q153) is an N5-methylglutamine.

The protein belongs to the universal ribosomal protein uL3 family. As to quaternary structure, part of the 50S ribosomal subunit. Forms a cluster with proteins L14 and L19. Methylated by PrmB.

Functionally, one of the primary rRNA binding proteins, it binds directly near the 3'-end of the 23S rRNA, where it nucleates assembly of the 50S subunit. This is Large ribosomal subunit protein uL3 from Burkholderia ambifaria (strain MC40-6).